We begin with the raw amino-acid sequence, 198 residues long: NAD(P)H dehydrogenase (quinone) (198 aa).

The Flavodoxin-like domain occupies 4–189; the sequence is VLVLYYSMYG…SIARYQGEYV (186 aa). FMN-binding positions include 10–15 and 78–80; these read SMYGHI and TRF. Tyr12 contributes to the NAD(+) binding site. Trp98 contacts substrate. FMN is bound by residues 113–118 and His133; that span reads STGTGG.

Belongs to the WrbA family. The cofactor is FMN.

It carries out the reaction a quinone + NADH + H(+) = a quinol + NAD(+). It catalyses the reaction a quinone + NADPH + H(+) = a quinol + NADP(+). In Shigella dysenteriae serotype 1 (strain Sd197), this protein is NAD(P)H dehydrogenase (quinone).